Consider the following 188-residue polypeptide: Elongation factor P (188 aa).

Belongs to the elongation factor P family.

It localises to the cytoplasm. The protein operates within protein biosynthesis; polypeptide chain elongation. Its function is as follows. Involved in peptide bond synthesis. Stimulates efficient translation and peptide-bond synthesis on native or reconstituted 70S ribosomes in vitro. Probably functions indirectly by altering the affinity of the ribosome for aminoacyl-tRNA, thus increasing their reactivity as acceptors for peptidyl transferase. This Bacteroides fragilis (strain ATCC 25285 / DSM 2151 / CCUG 4856 / JCM 11019 / LMG 10263 / NCTC 9343 / Onslow / VPI 2553 / EN-2) protein is Elongation factor P.